The primary structure comprises 187 residues: UPF0301 protein LPC_2717 (187 aa).

Belongs to the UPF0301 (AlgH) family.

This chain is UPF0301 protein LPC_2717, found in Legionella pneumophila (strain Corby).